The primary structure comprises 215 residues: Proteasome subunit beta type-1 (215 aa).

Position 1 is an N-acetylmethionine (methionine 1). The propeptide at 1 to 19 (MNGIQVDINRLKKGEVSLG) is removed in mature form. Threonine 20 acts as the Nucleophile in catalysis.

The protein belongs to the peptidase T1B family. The 26S proteasome consists of a 20S proteasome core and two 19S regulatory subunits. The 20S proteasome core is composed of 28 subunits that are arranged in four stacked rings, resulting in a barrel-shaped structure. The two end rings are each formed by seven alpha subunits, and the two central rings are each formed by seven beta subunits. The catalytic chamber with the active sites is on the inside of the barrel.

It is found in the cytoplasm. Its subcellular location is the nucleus. The catalysed reaction is Cleavage of peptide bonds with very broad specificity.. In terms of biological role, the proteasome degrades poly-ubiquitinated proteins in the cytoplasm and in the nucleus. It is essential for the regulated turnover of proteins and for the removal of misfolded proteins. The proteasome is a multicatalytic proteinase complex that is characterized by its ability to cleave peptides with Arg, Phe, Tyr, Leu, and Glu adjacent to the leaving group at neutral or slightly basic pH. It has an ATP-dependent proteolytic activity. PRE3 and PRE4 are necessary for the peptidyl-glutamyl-peptide-hydrolyzing activity. This subunit is necessary for the peptidylglutamyl-peptide hydrolyzing activity. The polypeptide is Proteasome subunit beta type-1 (PRE3) (Saccharomyces cerevisiae (strain ATCC 204508 / S288c) (Baker's yeast)).